The chain runs to 425 residues: Receptor-like protein 55 (425 aa).

A signal peptide spans 1-25; the sequence is MKPQQPQPPLLLLLLLPLLLTTVSS. The Extracellular segment spans residues 26–397; the sequence is YPLNPKQLKA…EEEHKGSNKT (372 aa). Asn-40, Asn-54, Asn-79, and Asn-132 each carry an N-linked (GlcNAc...) asparagine glycan. LRR repeat units lie at residues 144–169, 170–193, 195–216, 217–240, 242–264, 265–287, and 288–313; these read LKNL…ILGN, MHKL…SFHS, LRYI…ITRL, KNLK…IKSL, FLKN…LSSI, SELT…FFSE, and MKNL…SFIK. N-linked (GlcNAc...) asparagine glycosylation is found at Asn-182, Asn-202, Asn-223, Asn-245, Asn-278, Asn-308, and Asn-329. Residues 355–389 form a disordered region; that stretch reads PSQKEESLSGENDYDVEGGNEEKTENLKTKEEEEE. The segment covering 374–389 has biased composition (basic and acidic residues); that stretch reads NEEKTENLKTKEEEEE. An N-linked (GlcNAc...) asparagine glycan is attached at Asn-395. Residues 398–418 traverse the membrane as a helical segment; it reads LFGLGIGLFSLVFLILFLFYL. The Cytoplasmic portion of the chain corresponds to 419-425; the sequence is AKRCRLI.

This sequence belongs to the RLP family.

The protein localises to the cell membrane. In terms of biological role, involved in plant defense. In Arabidopsis thaliana (Mouse-ear cress), this protein is Receptor-like protein 55.